A 469-amino-acid polypeptide reads, in one-letter code: Probable acetate kinase (469 aa).

Residue N30 participates in Mg(2+) binding. K37 provides a ligand contact to ATP. A substrate-binding site is contributed by R122. The active-site Proton donor/acceptor is the D179. 239–243 contributes to the ATP binding site; the sequence is HLGSG. E453 is a binding site for Mg(2+).

The protein belongs to the acetokinase family. Requires Mg(2+) as cofactor.

It carries out the reaction acetate + ATP = acetyl phosphate + ADP. Its pathway is metabolic intermediate biosynthesis; acetyl-CoA biosynthesis; acetyl-CoA from acetate: step 1/2. The sequence is that of Probable acetate kinase from Neurospora crassa (strain ATCC 24698 / 74-OR23-1A / CBS 708.71 / DSM 1257 / FGSC 987).